We begin with the raw amino-acid sequence, 51 residues long: Sperm protamine P1 (51 aa).

It belongs to the protamine P1 family. Testis.

The protein resides in the nucleus. The protein localises to the chromosome. Functionally, protamines substitute for histones in the chromatin of sperm during the haploid phase of spermatogenesis. They compact sperm DNA into a highly condensed, stable and inactive complex. The sequence is that of Sperm protamine P1 (PRM1) from Nasalis larvatus (Proboscis monkey).